We begin with the raw amino-acid sequence, 235 residues long: Pyridoxine 5'-phosphate synthase (235 aa).

3-amino-2-oxopropyl phosphate is bound at residue Asn7. A 1-deoxy-D-xylulose 5-phosphate-binding site is contributed by 9–10 (DH). 3-amino-2-oxopropyl phosphate is bound at residue Arg18. His43 (proton acceptor) is an active-site residue. Arg45 and His50 together coordinate 1-deoxy-D-xylulose 5-phosphate. Glu70 serves as the catalytic Proton acceptor. A 1-deoxy-D-xylulose 5-phosphate-binding site is contributed by Thr100. His187 functions as the Proton donor in the catalytic mechanism. 3-amino-2-oxopropyl phosphate is bound by residues Gly188 and 209–210 (GH).

The protein belongs to the PNP synthase family. Homooctamer; tetramer of dimers.

Its subcellular location is the cytoplasm. The catalysed reaction is 3-amino-2-oxopropyl phosphate + 1-deoxy-D-xylulose 5-phosphate = pyridoxine 5'-phosphate + phosphate + 2 H2O + H(+). Its pathway is cofactor biosynthesis; pyridoxine 5'-phosphate biosynthesis; pyridoxine 5'-phosphate from D-erythrose 4-phosphate: step 5/5. Functionally, catalyzes the complicated ring closure reaction between the two acyclic compounds 1-deoxy-D-xylulose-5-phosphate (DXP) and 3-amino-2-oxopropyl phosphate (1-amino-acetone-3-phosphate or AAP) to form pyridoxine 5'-phosphate (PNP) and inorganic phosphate. The protein is Pyridoxine 5'-phosphate synthase of Desulfatibacillum aliphaticivorans.